Consider the following 745-residue polypeptide: Photosystem I P700 chlorophyll a apoprotein A2 (745 aa).

The next 8 helical transmembrane spans lie at 49 to 72, 138 to 161, 178 to 202, 276 to 294, 338 to 361, 377 to 403, 425 to 447, and 528 to 546; these read LFATHFGHLAIIFLWASGNVFHIA, LYAGAIGLLLLAAVFLFAGWLHLQ, LNHHLAGLFGVSSLAWAGHLVHVAI, MAHHHLAIAVIFIVAGHMY, LHFQLALALACLGVVTSLVAQHMY, AALYTHHQYIAGFLMVGAFAHGAIFLV, AIISHLSWVSLFLGFHTLGLYVH, and FLVHHAIALGLHTTTLILV. Cys570 and Cys579 together coordinate [4Fe-4S] cluster. Transmembrane regions (helical) follow at residues 586–607 and 654–676; these read AFYLAMFWMLNTIGWVTFYWHW and LAVWAWMFLFGHLVWATGFMFLI. His665, Met673, and Tyr681 together coordinate chlorophyll a. Residue Trp682 coordinates phylloquinone. Residues 718-738 traverse the membrane as a helical segment; that stretch reads LVGLAHFTVGYVLTYAAFVIA.

The protein belongs to the PsaA/PsaB family. As to quaternary structure, the PsaA/B heterodimer binds the P700 chlorophyll special pair and subsequent electron acceptors. PSI consists of a core antenna complex that captures photons, and an electron transfer chain that converts photonic excitation into a charge separation. The cyanobacterial PSI reaction center is composed of one copy each of PsaA,B,C,D,E,F,I,J,K,L,M and X, and forms trimeric complexes. PSI electron transfer chain: 5 chlorophyll a, 1 chlorophyll a', 2 phylloquinones and 3 4Fe-4S clusters. PSI core antenna: 90 chlorophyll a, 22 carotenoids, 3 phospholipids and 1 galactolipid. P700 is a chlorophyll a/chlorophyll a' dimer, A0 is one or more chlorophyll a, A1 is one or both phylloquinones and FX is a shared 4Fe-4S iron-sulfur center. serves as cofactor.

The protein resides in the cellular thylakoid membrane. It catalyses the reaction reduced [plastocyanin] + hnu + oxidized [2Fe-2S]-[ferredoxin] = oxidized [plastocyanin] + reduced [2Fe-2S]-[ferredoxin]. PsaA and PsaB bind P700, the primary electron donor of photosystem I (PSI), as well as the electron acceptors A0, A1 and FX. PSI is a plastocyanin/cytochrome c6-ferredoxin oxidoreductase, converting photonic excitation into a charge separation, which transfers an electron from the donor P700 chlorophyll pair to the spectroscopically characterized acceptors A0, A1, FX, FA and FB in turn. Oxidized P700 is reduced on the lumenal side of the thylakoid membrane by plastocyanin or cytochrome c6. The protein is Photosystem I P700 chlorophyll a apoprotein A2 of Synechococcus sp. (strain JA-3-3Ab) (Cyanobacteria bacterium Yellowstone A-Prime).